Consider the following 221-residue polypeptide: Immediate early response gene 2 protein (221 aa).

Methionine 1 carries the N-acetylmethionine modification. The tract at residues 54–156 (THQPEFPPSR…EGEATSEVSN (103 aa)) is disordered. Basic and acidic residues predominate over residues 64–77 (RALDPRLHPPREPE). The span at 125–136 (SDLSDGSDAGLV) shows a compositional bias: low complexity.

Belongs to the IER family.

The protein resides in the cytoplasm. It localises to the nucleus. DNA-binding protein that seems to act as a transcription factor. Involved in the regulation of neuronal differentiation, acts upon JNK-signaling pathway activation and plays a role in neurite outgrowth in hippocampal cells. May mediate with FIBP FGF-signaling in the establishment of laterality in the embryo. Promotes cell motility, seems to stimulate tumor metastasis. This chain is Immediate early response gene 2 protein (Ier2), found in Rattus norvegicus (Rat).